Reading from the N-terminus, the 366-residue chain is Methyltransferase phm5 (366 aa).

S-adenosyl-L-methionine is bound by residues 204-205 (GG), aspartate 230, 255-256 (SM), arginine 273, and arginine 274.

It belongs to the class I-like SAM-binding methyltransferase superfamily. Cation-independent O-methyltransferase family.

It functions in the pathway secondary metabolite biosynthesis. Methyltransferase; part of the gene cluster that mediates the biosynthesis of the trans-fused decalin-containing tetramic acid phomasetin, the stereochemical opposite of the HIV-1 integrase inhibitor equisetin. The PKS module of phm1 together with the enoylreductase phm4 catalyze the formation of the polyketide unit which is then conjugated to L-serine by the condensation domain of the phm1 NRPS module. Activity of the Dieckmann cyclase domain (RED) of phm1 results in release of the Dieckmann product intermediate. The Diels-Alderase phm7 then uses the Dieckmann product of phm1 as substrate and catalyzes the Diels-Alder cycloaddition to form the decalin ring of N-desmethylphomasetin. N-desmethylphomasetin is further methylated to phomasetin by the methyltransferase phm5. The protein is Methyltransferase phm5 of Pyrenochaetopsis sp.